A 371-amino-acid polypeptide reads, in one-letter code: Chaperone protein DnaJ (371 aa).

Residues 5–69 (DYYEVLGLSK…QKRAQYDQFG (65 aa)) form the J domain. A CR-type zinc finger spans residues 133 to 215 (GKELNVEIPV…CHGSSKVRKR (83 aa)). 8 residues coordinate Zn(2+): Cys-146, Cys-149, Cys-163, Cys-166, Cys-189, Cys-192, Cys-203, and Cys-206. CXXCXGXG motif repeat units lie at residues 146–153 (CDTCKGSG), 163–170 (CKHCSGSG), 189–196 (CGHCSGTG), and 203–210 (CTTCHGSS).

The protein belongs to the DnaJ family. As to quaternary structure, homodimer. It depends on Zn(2+) as a cofactor.

It localises to the cytoplasm. Functionally, participates actively in the response to hyperosmotic and heat shock by preventing the aggregation of stress-denatured proteins and by disaggregating proteins, also in an autonomous, DnaK-independent fashion. Unfolded proteins bind initially to DnaJ; upon interaction with the DnaJ-bound protein, DnaK hydrolyzes its bound ATP, resulting in the formation of a stable complex. GrpE releases ADP from DnaK; ATP binding to DnaK triggers the release of the substrate protein, thus completing the reaction cycle. Several rounds of ATP-dependent interactions between DnaJ, DnaK and GrpE are required for fully efficient folding. Also involved, together with DnaK and GrpE, in the DNA replication of plasmids through activation of initiation proteins. This chain is Chaperone protein DnaJ, found in Bacillus cereus (strain ATCC 14579 / DSM 31 / CCUG 7414 / JCM 2152 / NBRC 15305 / NCIMB 9373 / NCTC 2599 / NRRL B-3711).